A 1120-amino-acid chain; its full sequence is DNA-directed RNA polymerase subunit beta (1120 aa).

The protein belongs to the RNA polymerase beta chain family. In terms of assembly, in plastids the minimal PEP RNA polymerase catalytic core is composed of four subunits: alpha, beta, beta', and beta''. When a (nuclear-encoded) sigma factor is associated with the core the holoenzyme is formed, which can initiate transcription.

Its subcellular location is the plastid. The protein resides in the chloroplast. It carries out the reaction RNA(n) + a ribonucleoside 5'-triphosphate = RNA(n+1) + diphosphate. DNA-dependent RNA polymerase catalyzes the transcription of DNA into RNA using the four ribonucleoside triphosphates as substrates. This chain is DNA-directed RNA polymerase subunit beta, found in Gracilaria tenuistipitata var. liui (Red alga).